The primary structure comprises 65 residues: Large ribosomal subunit protein bL35 (65 aa).

Residues 1–46 form a disordered region; the sequence is MPKIKTNRGAAKRFKPTGSGGFKRAQSHRRHILTKKSTKRKRHLRS. Residues 25–45 are compositionally biased toward basic residues; that stretch reads AQSHRRHILTKKSTKRKRHLR.

Belongs to the bacterial ribosomal protein bL35 family.

This Thioalkalivibrio sulfidiphilus (strain HL-EbGR7) protein is Large ribosomal subunit protein bL35.